The chain runs to 386 residues: Eukaryotic translation initiation factor 3 subunit M (386 aa).

A PCI domain is found at 181–343 (NSELASKVMI…RKVHISSTMH (163 aa)).

This sequence belongs to the eIF-3 subunit M family. Component of the eukaryotic translation initiation factor 3 (eIF-3) complex.

It is found in the cytoplasm. Its function is as follows. Component of the eukaryotic translation initiation factor 3 (eIF-3) complex, which is involved in protein synthesis of a specialized repertoire of mRNAs and, together with other initiation factors, stimulates binding of mRNA and methionyl-tRNAi to the 40S ribosome. The eIF-3 complex specifically targets and initiates translation of a subset of mRNAs involved in cell proliferation. The sequence is that of Eukaryotic translation initiation factor 3 subunit M from Culex quinquefasciatus (Southern house mosquito).